A 532-amino-acid polypeptide reads, in one-letter code: Phosphoenolpyruvate carboxykinase (ATP) (532 aa).

Arg60, Tyr194, and Lys200 together coordinate substrate. ATP contacts are provided by residues Lys200, His219, and 237–245 (GLSGTGKTT). Residues Lys200 and His219 each contribute to the Mn(2+) site. Asp258 is a Mn(2+) binding site. ATP contacts are provided by Glu286, Arg324, and Thr449. Arg324 is a substrate binding site.

Belongs to the phosphoenolpyruvate carboxykinase (ATP) family. The cofactor is Mn(2+).

The protein localises to the cytoplasm. It catalyses the reaction oxaloacetate + ATP = phosphoenolpyruvate + ADP + CO2. It participates in carbohydrate biosynthesis; gluconeogenesis. Its function is as follows. Involved in the gluconeogenesis. Catalyzes the conversion of oxaloacetate (OAA) to phosphoenolpyruvate (PEP) through direct phosphoryl transfer between the nucleoside triphosphate and OAA. In Cereibacter sphaeroides (strain ATCC 17029 / ATH 2.4.9) (Rhodobacter sphaeroides), this protein is Phosphoenolpyruvate carboxykinase (ATP).